Here is a 283-residue protein sequence, read N- to C-terminus: Pantothenate synthetase (283 aa).

30-37 (MGNLHDGH) is a binding site for ATP. Catalysis depends on histidine 37, which acts as the Proton donor. Position 61 (glutamine 61) interacts with (R)-pantoate. Glutamine 61 is a binding site for beta-alanine. 149-152 (GEKD) is an ATP binding site. (R)-pantoate is bound at residue glutamine 155. 186-189 (LSSR) serves as a coordination point for ATP.

This sequence belongs to the pantothenate synthetase family. In terms of assembly, homodimer.

It localises to the cytoplasm. The enzyme catalyses (R)-pantoate + beta-alanine + ATP = (R)-pantothenate + AMP + diphosphate + H(+). The protein operates within cofactor biosynthesis; (R)-pantothenate biosynthesis; (R)-pantothenate from (R)-pantoate and beta-alanine: step 1/1. Catalyzes the condensation of pantoate with beta-alanine in an ATP-dependent reaction via a pantoyl-adenylate intermediate. This Escherichia coli O17:K52:H18 (strain UMN026 / ExPEC) protein is Pantothenate synthetase.